The following is a 314-amino-acid chain: Ribosomal protein uL3 glutamine methyltransferase (314 aa).

This sequence belongs to the protein N5-glutamine methyltransferase family. PrmB subfamily.

The catalysed reaction is L-glutaminyl-[ribosomal protein uL3] + S-adenosyl-L-methionine = N(5)-methyl-L-glutaminyl-[ribosomal protein uL3] + S-adenosyl-L-homocysteine + H(+). Functionally, methylates large ribosomal subunit protein uL3 on a specific glutamine residue. The protein is Ribosomal protein uL3 glutamine methyltransferase of Vibrio cholerae serotype O1 (strain ATCC 39315 / El Tor Inaba N16961).